We begin with the raw amino-acid sequence, 201 residues long: Two-component response regulator ORR10 (201 aa).

A Response regulatory domain is found at His-10 to Leu-142. Residue Asp-75 is modified to 4-aspartylphosphate. A disordered region spans residues His-149–Ser-201. Positions Ser-158–Asn-180 are enriched in low complexity.

This sequence belongs to the ARR family. Type-A subfamily. In terms of processing, two-component system major event consists of a His-to-Asp phosphorelay between a sensor histidine kinase (HK) and a response regulator (RR). In plants, the His-to-Asp phosphorelay involves an additional intermediate named Histidine-containing phosphotransfer protein (HPt). This multistep phosphorelay consists of a His-Asp-His-Asp sequential transfer of a phosphate group between first a His and an Asp of the HK protein, followed by the transfer to a conserved His of the HPt protein and finally the transfer to an Asp in the receiver domain of the RR protein. As to expression, expressed in mature leaves, and at low levels in roots, shoots and flowers.

In terms of biological role, functions as a response regulator involved in His-to-Asp phosphorelay signal transduction system. Phosphorylation of the Asp residue in the receiver domain activates the ability of the protein to promote the transcription of target genes. Type-A response regulators seem to act as negative regulators of the cytokinin signaling. This is Two-component response regulator ORR10 from Oryza sativa subsp. indica (Rice).